The sequence spans 642 residues: Probable Xaa-Pro aminopeptidase P (642 aa).

Mn(2+) is bound by residues Asp-439, Asp-450, Glu-548, and Glu-562.

This sequence belongs to the peptidase M24B family. It depends on Mn(2+) as a cofactor.

It catalyses the reaction Release of any N-terminal amino acid, including proline, that is linked to proline, even from a dipeptide or tripeptide.. Its function is as follows. Catalyzes the removal of a penultimate prolyl residue from the N-termini of peptides. In Laccaria bicolor (strain S238N-H82 / ATCC MYA-4686) (Bicoloured deceiver), this protein is Probable Xaa-Pro aminopeptidase P (AMPP).